A 176-amino-acid polypeptide reads, in one-letter code: Endoribonuclease YbeY (176 aa).

Zn(2+)-binding residues include H138, H142, and H148.

It belongs to the endoribonuclease YbeY family. Zn(2+) is required as a cofactor.

The protein localises to the cytoplasm. Single strand-specific metallo-endoribonuclease involved in late-stage 70S ribosome quality control and in maturation of the 3' terminus of the 16S rRNA. This Trichormus variabilis (strain ATCC 29413 / PCC 7937) (Anabaena variabilis) protein is Endoribonuclease YbeY.